A 309-amino-acid chain; its full sequence is 4-hydroxy-3-methylbut-2-enyl diphosphate reductase (309 aa).

Cysteine 12 contacts [4Fe-4S] cluster. Positions 41 and 74 each coordinate (2E)-4-hydroxy-3-methylbut-2-enyl diphosphate. Dimethylallyl diphosphate is bound by residues histidine 41 and histidine 74. 2 residues coordinate isopentenyl diphosphate: histidine 41 and histidine 74. A [4Fe-4S] cluster-binding site is contributed by cysteine 96. Histidine 124 contributes to the (2E)-4-hydroxy-3-methylbut-2-enyl diphosphate binding site. Histidine 124 contacts dimethylallyl diphosphate. An isopentenyl diphosphate-binding site is contributed by histidine 124. The active-site Proton donor is the glutamate 126. A (2E)-4-hydroxy-3-methylbut-2-enyl diphosphate-binding site is contributed by threonine 167. Cysteine 197 contacts [4Fe-4S] cluster. The (2E)-4-hydroxy-3-methylbut-2-enyl diphosphate site is built by serine 225, serine 226, asparagine 227, and serine 269. Residues serine 225, serine 226, asparagine 227, and serine 269 each contribute to the dimethylallyl diphosphate site. The isopentenyl diphosphate site is built by serine 225, serine 226, asparagine 227, and serine 269.

Belongs to the IspH family. [4Fe-4S] cluster is required as a cofactor.

The enzyme catalyses isopentenyl diphosphate + 2 oxidized [2Fe-2S]-[ferredoxin] + H2O = (2E)-4-hydroxy-3-methylbut-2-enyl diphosphate + 2 reduced [2Fe-2S]-[ferredoxin] + 2 H(+). It catalyses the reaction dimethylallyl diphosphate + 2 oxidized [2Fe-2S]-[ferredoxin] + H2O = (2E)-4-hydroxy-3-methylbut-2-enyl diphosphate + 2 reduced [2Fe-2S]-[ferredoxin] + 2 H(+). The protein operates within isoprenoid biosynthesis; dimethylallyl diphosphate biosynthesis; dimethylallyl diphosphate from (2E)-4-hydroxy-3-methylbutenyl diphosphate: step 1/1. It participates in isoprenoid biosynthesis; isopentenyl diphosphate biosynthesis via DXP pathway; isopentenyl diphosphate from 1-deoxy-D-xylulose 5-phosphate: step 6/6. Its function is as follows. Catalyzes the conversion of 1-hydroxy-2-methyl-2-(E)-butenyl 4-diphosphate (HMBPP) into a mixture of isopentenyl diphosphate (IPP) and dimethylallyl diphosphate (DMAPP). Acts in the terminal step of the DOXP/MEP pathway for isoprenoid precursor biosynthesis. This Shewanella halifaxensis (strain HAW-EB4) protein is 4-hydroxy-3-methylbut-2-enyl diphosphate reductase.